The sequence spans 202 residues: NADH-quinone oxidoreductase subunit C (202 aa).

This sequence belongs to the complex I 30 kDa subunit family. As to quaternary structure, NDH-1 is composed of 14 different subunits. Subunits NuoB, C, D, E, F, and G constitute the peripheral sector of the complex.

Its subcellular location is the cell inner membrane. It catalyses the reaction a quinone + NADH + 5 H(+)(in) = a quinol + NAD(+) + 4 H(+)(out). Its function is as follows. NDH-1 shuttles electrons from NADH, via FMN and iron-sulfur (Fe-S) centers, to quinones in the respiratory chain. The immediate electron acceptor for the enzyme in this species is believed to be ubiquinone. Couples the redox reaction to proton translocation (for every two electrons transferred, four hydrogen ions are translocated across the cytoplasmic membrane), and thus conserves the redox energy in a proton gradient. The chain is NADH-quinone oxidoreductase subunit C from Brucella abortus (strain 2308).